The sequence spans 338 residues: Glyceraldehyde-3-phosphate dehydrogenase, cytosolic (338 aa).

Residues 13–14 (RI), Asp-35, and Arg-82 each bind NAD(+). D-glyceraldehyde 3-phosphate-binding positions include 153–155 (SCT), Thr-184, 213–214 (TG), and Arg-236. Cys-154 functions as the Nucleophile in the catalytic mechanism. Position 318 (Asn-318) interacts with NAD(+).

It belongs to the glyceraldehyde-3-phosphate dehydrogenase family. As to quaternary structure, homotetramer.

The protein localises to the cytoplasm. It carries out the reaction D-glyceraldehyde 3-phosphate + phosphate + NAD(+) = (2R)-3-phospho-glyceroyl phosphate + NADH + H(+). Its pathway is carbohydrate degradation; glycolysis; pyruvate from D-glyceraldehyde 3-phosphate: step 1/5. Functionally, key enzyme in glycolysis that catalyzes the first step of the pathway by converting D-glyceraldehyde 3-phosphate (G3P) into 3-phospho-D-glyceroyl phosphate. Essential for the maintenance of cellular ATP levels and carbohydrate metabolism. This chain is Glyceraldehyde-3-phosphate dehydrogenase, cytosolic (GAPC), found in Dianthus caryophyllus (Carnation).